A 150-amino-acid chain; its full sequence is UPF0756 membrane protein ABSDF1616 (150 aa).

The next 4 helical transmembrane spans lie at 1–21, 45–65, 83–103, and 115–135; these read MLAQ…CGLL, FFPY…TIGV, FISF…WLGG, and VVAG…GVPV.

This sequence belongs to the UPF0756 family.

The protein resides in the cell membrane. The sequence is that of UPF0756 membrane protein ABSDF1616 from Acinetobacter baumannii (strain SDF).